The sequence spans 142 residues: Hemoglobin subunit alpha-B (142 aa).

The Globin domain maps to 2–142 (VLSPTDKSNV…VSTVLTSKYR (141 aa)). Histidine 59 is an O2 binding site. A heme b-binding site is contributed by histidine 88.

Belongs to the globin family. In terms of assembly, heterotetramer of two alpha chains and two beta chains. Red blood cells.

In terms of biological role, involved in oxygen transport from the lung to the various peripheral tissues. This Otolemur crassicaudatus (Brown greater galago) protein is Hemoglobin subunit alpha-B (HBAB).